The chain runs to 353 residues: MAADGDWQDFYEFQEPARSLLDQENCNASPEPGAEAGAEAGGGADGFPAPACSLEEKLSLCFRPSDPGAEPPRTAVRPITERSLLQGDEIWNALTDNYGNVMPVDWKSSHTRTLHLLTLNLSEKGVSDSLLFDTSDDEELREQLDMHSIIVSCVNDEPLFTADQVIEEIEEMMQESPDPEDDETPTQSDRLSMLSQEIQTLKRSSTGSYEERVKRLSVSELNEILEEIETAIKEYSEELVQQLALRDELEFEKEVKNSFISVLIEVQNKQKEHKETAKKKKKLKNGSSQNGKNERSHMPGTYLTTVIPYEKKNGPPSVEDLQILTKILRAMKEDSEKVPSLLTDYILKVLCPT.

Positions 19–49 are disordered; the sequence is SLLDQENCNASPEPGAEAGAEAGGGADGFPA. Low complexity predominate over residues 28 to 38; that stretch reads ASPEPGAEAGA. 3 positions are modified to phosphoserine: Ser135, Ser176, and Ser195. A coiled-coil region spans residues 214–286; that stretch reads KRLSVSELNE…AKKKKKLKNG (73 aa). The disordered stretch occupies residues 271 to 300; sequence KEHKETAKKKKKLKNGSSQNGKNERSHMPG.

It belongs to the zygin family. As to quaternary structure, homodimer; disulfide-linked. May form heterodimers with FEZ1. Interacts with synaptotagmin. Expressed in nonneural tissues, such as heart, lung, spleen, muscle, testis, placenta and melanocytes.

Its function is as follows. Involved in axonal outgrowth and fasciculation. This chain is Fasciculation and elongation protein zeta-2 (FEZ2), found in Homo sapiens (Human).